Here is a 368-residue protein sequence, read N- to C-terminus: UV excision repair protein rhp23 (368 aa).

The 77-residue stretch at 1 to 77 (MNLTFKNLQQ…IVCMVSRPKT (77 aa)) folds into the Ubiquitin-like domain. Low complexity-rich tracts occupy residues 76–88 (KTST…AASP) and 103–124 (APSS…AAPS). Residues 76 to 134 (KTSTSTPKSAASPAPNPPASVPEKKVEAPSSTVAESTSTTQTVAAAAPSNPDTTATSEA) form a disordered region. 2 positions are modified to phosphoserine: Ser84 and Ser87. UBA domains are found at residues 135–185 (PIDA…LLTG) and 320–360 (QEES…LFEH). Ser364 carries the phosphoserine modification.

The protein localises to the nucleus. In terms of biological role, involved in postreplication repair of UV-damaged DNA. Postreplication repair functions in gap-filling of a daughter strand on replication of damaged DNA. Protects ubiquitin chains against dissambly by deubiquitinating enzymes thereby promoting protein degradation. The sequence is that of UV excision repair protein rhp23 (rhp23) from Schizosaccharomyces pombe (strain 972 / ATCC 24843) (Fission yeast).